The chain runs to 473 residues: Cysteine--tRNA ligase (473 aa).

Residue Cys30 coordinates Zn(2+). The 'HIGH' region signature appears at 32 to 42 (MTVYDYCHIGH). Zn(2+) contacts are provided by Cys213, His238, and Glu242. Residues 270 to 274 (KMSKS) carry the 'KMSKS' region motif. Residue Lys273 coordinates ATP.

This sequence belongs to the class-I aminoacyl-tRNA synthetase family. Monomer. It depends on Zn(2+) as a cofactor.

The protein localises to the cytoplasm. It catalyses the reaction tRNA(Cys) + L-cysteine + ATP = L-cysteinyl-tRNA(Cys) + AMP + diphosphate. The sequence is that of Cysteine--tRNA ligase from Acinetobacter baumannii (strain AB307-0294).